The chain runs to 469 residues: Calcium-binding mitochondrial carrier protein SCaMC-2-B (469 aa).

Over 1–189 (MLCLCLYVPV…EKNTGMWWRH (189 aa)) the chain is Mitochondrial intermembrane. EF-hand domains are found at residues 47-80 (SYRKWRKKVVKAGDKDLDGQLDFEEFVHYLRDHE), 78-113 (DHEKKLRLVFKSLDKKNDGHIDSQEIMQSLRDLGVH), and 114-149 (ISEEQAEKILKSMDKNGTMTIDWNEWRDYHLLHPAE). Residues aspartate 60, aspartate 62, aspartate 64, glutamine 66, and glutamate 71 each contribute to the Ca(2+) site. Solcar repeat units lie at residues 184–270 (GMWW…IKRL), 278–363 (LGIL…LKNS), and 375–463 (PGVF…LKIT). The chain crosses the membrane as a helical span at residues 190–207 (LVAGGGAGAVSRTCTAPL). The Mitochondrial matrix segment spans residues 208–244 (DRLKVLMQVHATRSNSMGIAGGFTQMIREGGLRSLWR). The chain crosses the membrane as a helical span at residues 245 to 264 (GNGINVLKIAPESAIKFMAY). The Mitochondrial intermembrane portion of the chain corresponds to 265 to 287 (EQIKRLIGSNQETLGILERLVSG). The chain crosses the membrane as a helical span at residues 288–301 (SLAGAIAQSSIYPM). Residues 302–337 (EVLKTRLALGRTGQYSGIADCAKHIFKKEGMTAFYK) lie on the Mitochondrial matrix side of the membrane. Residues 338-357 (GYIPNMLGIIPYAGIDLAVY) form a helical membrane-spanning segment. Topologically, residues 358 to 380 (ETLKNSWLQRFATDSADPGVFVL) are mitochondrial intermembrane. Residues 381-398 (LACGTMSSTCGQLASYPL) form a helical membrane-spanning segment. The Mitochondrial matrix segment spans residues 399–437 (ALVRTRMQAQASQEGSPQMTMSGLFRHIVRTEGAIGLYR). The helical transmembrane segment at 438-457 (GLAPNFMKVIPAVSISYVVY) threads the bilayer. Topologically, residues 458-469 (ENLKITLGVQSR) are mitochondrial intermembrane.

It belongs to the mitochondrial carrier (TC 2.A.29) family.

Its subcellular location is the mitochondrion inner membrane. Its function is as follows. Calcium-dependent mitochondrial solute carrier. This Danio rerio (Zebrafish) protein is Calcium-binding mitochondrial carrier protein SCaMC-2-B (slc25a25b).